The chain runs to 456 residues: Serine/threonine-protein kinase meng-po (456 aa).

The disordered stretch occupies residues Arg15–Lys78. Over residues Ser22–Thr55 the composition is skewed to low complexity. In terms of domain architecture, Protein kinase spans Tyr101 to Val367. Residues Leu107–Ile115 and Lys130 each bind ATP. Residue Asp221 is the Proton acceptor of the active site. Ser334 is subject to Phosphoserine; by PKA.

This sequence belongs to the protein kinase superfamily. Ser/Thr protein kinase family. The cofactor is Mg(2+). In terms of tissue distribution, expressed in the mushroom bodies (at protein level).

The enzyme catalyses L-seryl-[protein] + ATP = O-phospho-L-seryl-[protein] + ADP + H(+). It carries out the reaction L-threonyl-[protein] + ATP = O-phospho-L-threonyl-[protein] + ADP + H(+). Its activity is regulated as follows. Activated by Pka-C1-mediated phosphorylation of Ser-334. In terms of biological role, serine/threonine-protein kinase involved in memory formation. Together with the cAMP-dependent protein kinase A Pka-C1, promotes long-term memory (LTM) by regulating CrebB stability and activity. Involved in the maintenance of anesthesia-sensitive memory (ASM) which includes short-term memory (STM) and middle-term memory (MTM). The protein is Serine/threonine-protein kinase meng-po of Drosophila melanogaster (Fruit fly).